A 310-amino-acid chain; its full sequence is GMP synthase [glutamine-hydrolyzing] subunit B (310 aa).

Residues 2–185 (FKTEPFIEES…LGLPDQIAHR (184 aa)) enclose the GMPS ATP-PPase domain. An ATP-binding site is contributed by 29 to 35 (SGGVDSA).

Heterodimer composed of a glutamine amidotransferase subunit (A) and a GMP-binding subunit (B).

It catalyses the reaction XMP + L-glutamine + ATP + H2O = GMP + L-glutamate + AMP + diphosphate + 2 H(+). The protein operates within purine metabolism; GMP biosynthesis; GMP from XMP (L-Gln route): step 1/1. Its function is as follows. Catalyzes the synthesis of GMP from XMP. This chain is GMP synthase [glutamine-hydrolyzing] subunit B, found in Methanococcus maripaludis (strain DSM 14266 / JCM 13030 / NBRC 101832 / S2 / LL).